We begin with the raw amino-acid sequence, 397 residues long: 1-deoxy-D-xylulose 5-phosphate reductoisomerase (397 aa).

NADPH-binding residues include threonine 10, glycine 11, serine 12, isoleucine 13, glycine 36, lysine 37, asparagine 38, and asparagine 124. 1-deoxy-D-xylulose 5-phosphate is bound at residue lysine 125. Glutamate 126 is an NADPH binding site. Aspartate 150 lines the Mn(2+) pocket. 1-deoxy-D-xylulose 5-phosphate-binding residues include serine 151, glutamate 152, serine 186, and histidine 209. A Mn(2+)-binding site is contributed by glutamate 152. Glycine 215 provides a ligand contact to NADPH. 4 residues coordinate 1-deoxy-D-xylulose 5-phosphate: serine 222, asparagine 227, lysine 228, and glutamate 231. Glutamate 231 is a Mn(2+) binding site.

This sequence belongs to the DXR family. In terms of assembly, homodimer. Mg(2+) is required as a cofactor. Mn(2+) serves as cofactor.

The catalysed reaction is 2-C-methyl-D-erythritol 4-phosphate + NADP(+) = 1-deoxy-D-xylulose 5-phosphate + NADPH + H(+). It functions in the pathway isoprenoid biosynthesis; isopentenyl diphosphate biosynthesis via DXP pathway; isopentenyl diphosphate from 1-deoxy-D-xylulose 5-phosphate: step 1/6. Its function is as follows. Catalyzes the NADPH-dependent rearrangement and reduction of 1-deoxy-D-xylulose-5-phosphate (DXP) to 2-C-methyl-D-erythritol 4-phosphate (MEP). The polypeptide is 1-deoxy-D-xylulose 5-phosphate reductoisomerase (Proteus mirabilis (strain HI4320)).